Consider the following 166-residue polypeptide: Putative transmembrane protein encoded by LINC00477 (166 aa).

N-linked (GlcNAc...) asparagine glycosylation occurs at asparagine 7. 3 consecutive transmembrane segments (helical) span residues 15–35 (VSSFQGSPATPLSFLFFFFLC), 41–61 (MTGCFTFFLDFIFFFAGVLGP), and 63–83 (PMGMYSGASTLTGFFLLRFLG). The disordered stretch occupies residues 127–166 (LPVPHPPSPLSKCPQHPRPRRTKGPGLRKLWGPGPPFFPS).

Its subcellular location is the membrane. This is Putative transmembrane protein encoded by LINC00477 (LINC00477) from Homo sapiens (Human).